A 141-amino-acid polypeptide reads, in one-letter code: Nucleoside triphosphatase NudI (141 aa).

A Nudix hydrolase domain is found at 1–141; sequence MRQRTIVCPL…RHTLALKGLL (141 aa). The Nudix box motif lies at 38–59; that stretch reads GGVEPGERIEEALRREVREELG.

Belongs to the Nudix hydrolase family. NudI subfamily. Monomer. It depends on Mg(2+) as a cofactor.

The catalysed reaction is a ribonucleoside 5'-triphosphate + H2O = a ribonucleoside 5'-phosphate + diphosphate + H(+). The enzyme catalyses a 2'-deoxyribonucleoside 5'-triphosphate + H2O = a 2'-deoxyribonucleoside 5'-phosphate + diphosphate + H(+). It catalyses the reaction dUTP + H2O = dUMP + diphosphate + H(+). It carries out the reaction dTTP + H2O = dTMP + diphosphate + H(+). The catalysed reaction is dCTP + H2O = dCMP + diphosphate + H(+). Functionally, catalyzes the hydrolysis of nucleoside triphosphates, with a preference for pyrimidine deoxynucleoside triphosphates (dUTP, dTTP and dCTP). The polypeptide is Nucleoside triphosphatase NudI (Salmonella agona (strain SL483)).